The chain runs to 312 residues: MDKEWLEVCIYTSSEALEAISGILYNTGVKGVSIEDPKDIEFKKKHPGDWDYFDETLLKVKDTAIVKGYYKEDDKFNEYLDYIKKSVSNLDQFGIDKGKGLVEVHKVNEEDWENNWKKYYKPTKVSNKIVIKPIWENYDKKQEEIIVELDPGMAFGTGTHETTRMCINALEKHIKEDRTVFDIGCGSGILSIAAAKLGAKHVIGVDLDPVAVKSSKENIKYNNLDNIEILEGNLMEVVEGRANIVVANIIADVIIFLTEGVKAFIEKDGYFIASGIINSRKEDVIKKLEETGFVIEEVREEGEWVCIVSKIN.

Positions 163, 184, 206, and 248 each coordinate S-adenosyl-L-methionine.

This sequence belongs to the methyltransferase superfamily. PrmA family.

The protein localises to the cytoplasm. The catalysed reaction is L-lysyl-[protein] + 3 S-adenosyl-L-methionine = N(6),N(6),N(6)-trimethyl-L-lysyl-[protein] + 3 S-adenosyl-L-homocysteine + 3 H(+). In terms of biological role, methylates ribosomal protein L11. The protein is Ribosomal protein L11 methyltransferase of Clostridium botulinum (strain 657 / Type Ba4).